Consider the following 186-residue polypeptide: MNVASIMDDLKRRMDGAIVAFKHELGGLRTGRASASLLEPLTVESYGSVVHINQVANISVPEPRMLFVSVWDKTMVGAVERAIRDSGLGLNPITDGTNLRIPLPELNEERRKELVKIAHHYAEQARVATRHVRRDGMDNLKKLEKDGEIGQDEAHSLSEKVQKLTDETIADIDKILAVKESEIMHV.

This sequence belongs to the RRF family.

Its subcellular location is the cytoplasm. Responsible for the release of ribosomes from messenger RNA at the termination of protein biosynthesis. May increase the efficiency of translation by recycling ribosomes from one round of translation to another. This is Ribosome-recycling factor from Bartonella tribocorum (strain CIP 105476 / IBS 506).